Reading from the N-terminus, the 469-residue chain is Proline--tRNA ligase (469 aa).

It belongs to the class-II aminoacyl-tRNA synthetase family. ProS type 3 subfamily. As to quaternary structure, homodimer.

The protein localises to the cytoplasm. It carries out the reaction tRNA(Pro) + L-proline + ATP = L-prolyl-tRNA(Pro) + AMP + diphosphate. Its function is as follows. Catalyzes the attachment of proline to tRNA(Pro) in a two-step reaction: proline is first activated by ATP to form Pro-AMP and then transferred to the acceptor end of tRNA(Pro). In Methanobrevibacter smithii (strain ATCC 35061 / DSM 861 / OCM 144 / PS), this protein is Proline--tRNA ligase.